We begin with the raw amino-acid sequence, 520 residues long: 2-isopropylmalate synthase (520 aa).

The Pyruvate carboxyltransferase domain occupies 12–274 (VLIFDTTLRD…TTGIDTTQIM (263 aa)). Residues aspartate 21, histidine 209, histidine 211, and asparagine 245 each contribute to the Mn(2+) site. Residues 398–520 (RLLSLTVIAG…RLHAQHAAAE (123 aa)) are regulatory domain.

The protein belongs to the alpha-IPM synthase/homocitrate synthase family. LeuA type 1 subfamily. Homodimer. Mn(2+) is required as a cofactor.

It is found in the cytoplasm. It carries out the reaction 3-methyl-2-oxobutanoate + acetyl-CoA + H2O = (2S)-2-isopropylmalate + CoA + H(+). Its pathway is amino-acid biosynthesis; L-leucine biosynthesis; L-leucine from 3-methyl-2-oxobutanoate: step 1/4. Catalyzes the condensation of the acetyl group of acetyl-CoA with 3-methyl-2-oxobutanoate (2-ketoisovalerate) to form 3-carboxy-3-hydroxy-4-methylpentanoate (2-isopropylmalate). This is 2-isopropylmalate synthase from Methylobacterium nodulans (strain LMG 21967 / CNCM I-2342 / ORS 2060).